The sequence spans 635 residues: Chaperone protein DnaK (635 aa).

Thr200 carries the post-translational modification Phosphothreonine; by autocatalysis. The segment at 595 to 635 (KAQPLTEKVQAKSSAENTSKEKSKADDDVVDADFEEVKDDK) is disordered. Basic and acidic residues predominate over residues 612-621 (TSKEKSKADD). Over residues 622–635 (DVVDADFEEVKDDK) the composition is skewed to acidic residues.

The protein belongs to the heat shock protein 70 family.

Acts as a chaperone. This Ruthia magnifica subsp. Calyptogena magnifica protein is Chaperone protein DnaK.